Reading from the N-terminus, the 95-residue chain is Co-chaperonin GroES (95 aa).

This sequence belongs to the GroES chaperonin family. In terms of assembly, heptamer of 7 subunits arranged in a ring. Interacts with the chaperonin GroEL.

It localises to the cytoplasm. In terms of biological role, together with the chaperonin GroEL, plays an essential role in assisting protein folding. The GroEL-GroES system forms a nano-cage that allows encapsulation of the non-native substrate proteins and provides a physical environment optimized to promote and accelerate protein folding. GroES binds to the apical surface of the GroEL ring, thereby capping the opening of the GroEL channel. This chain is Co-chaperonin GroES, found in Ruegeria pomeroyi (strain ATCC 700808 / DSM 15171 / DSS-3) (Silicibacter pomeroyi).